Consider the following 175-residue polypeptide: Anterior gradient protein 2 homolog (175 aa).

An N-terminal signal peptide occupies residues M1–A20. The interval R21–L40 is required to promote cell adhesion. 2 short sequence motifs (homodimer stabilization; interchain) span residues S45 to W54 and E60 to T67.

It belongs to the AGR family. As to quaternary structure, monomer and homodimer. Interacts with LYPD3 and DAG1 (alphaDAG1). Interacts with MUC2; disulfide-linked. In terms of tissue distribution, expressed strongly in trachea, lung, stomach, colon, prostate and small intestine. Expressed weakly in pituitary gland, salivary gland, mammary gland, bladder, appendix, ovary, fetal lung, uterus, pancreas, kidney, fetal kidney, testis, placenta, thyroid gland and in estrogen receptor (ER)-positive breast cancer cell lines.

It is found in the secreted. The protein resides in the endoplasmic reticulum. In terms of biological role, required for MUC2 post-transcriptional synthesis and secretion. May play a role in the production of mucus by intestinal cells. Proto-oncogene that may play a role in cell migration, cell differentiation and cell growth. Promotes cell adhesion. This is Anterior gradient protein 2 homolog (AGR2) from Homo sapiens (Human).